Here is a 333-residue protein sequence, read N- to C-terminus: Holliday junction branch migration complex subunit RuvB (333 aa).

Residues Met1–Tyr182 are large ATPase domain (RuvB-L). ATP-binding positions include Leu21, Arg22, Gly63, Lys66, Thr67, Thr68, Glu129–Phe131, Arg172, Tyr182, and Arg219. Thr67 contributes to the Mg(2+) binding site. The segment at Lys183–His253 is small ATPAse domain (RuvB-S). The interval Pro256 to Gly333 is head domain (RuvB-H). Arg311 and Arg316 together coordinate DNA.

Belongs to the RuvB family. As to quaternary structure, homohexamer. Forms an RuvA(8)-RuvB(12)-Holliday junction (HJ) complex. HJ DNA is sandwiched between 2 RuvA tetramers; dsDNA enters through RuvA and exits via RuvB. An RuvB hexamer assembles on each DNA strand where it exits the tetramer. Each RuvB hexamer is contacted by two RuvA subunits (via domain III) on 2 adjacent RuvB subunits; this complex drives branch migration. In the full resolvosome a probable DNA-RuvA(4)-RuvB(12)-RuvC(2) complex forms which resolves the HJ.

The protein localises to the cytoplasm. It carries out the reaction ATP + H2O = ADP + phosphate + H(+). Its function is as follows. The RuvA-RuvB-RuvC complex processes Holliday junction (HJ) DNA during genetic recombination and DNA repair, while the RuvA-RuvB complex plays an important role in the rescue of blocked DNA replication forks via replication fork reversal (RFR). RuvA specifically binds to HJ cruciform DNA, conferring on it an open structure. The RuvB hexamer acts as an ATP-dependent pump, pulling dsDNA into and through the RuvAB complex. RuvB forms 2 homohexamers on either side of HJ DNA bound by 1 or 2 RuvA tetramers; 4 subunits per hexamer contact DNA at a time. Coordinated motions by a converter formed by DNA-disengaged RuvB subunits stimulates ATP hydrolysis and nucleotide exchange. Immobilization of the converter enables RuvB to convert the ATP-contained energy into a lever motion, pulling 2 nucleotides of DNA out of the RuvA tetramer per ATP hydrolyzed, thus driving DNA branch migration. The RuvB motors rotate together with the DNA substrate, which together with the progressing nucleotide cycle form the mechanistic basis for DNA recombination by continuous HJ branch migration. Branch migration allows RuvC to scan DNA until it finds its consensus sequence, where it cleaves and resolves cruciform DNA. This chain is Holliday junction branch migration complex subunit RuvB, found in Shouchella clausii (strain KSM-K16) (Alkalihalobacillus clausii).